The chain runs to 317 residues: Putative methyltransferase YMR310C (317 aa).

S190 carries the phosphoserine modification.

This sequence belongs to the class IV-like SAM-binding methyltransferase superfamily.

It localises to the nucleus. The chain is Putative methyltransferase YMR310C from Saccharomyces cerevisiae (strain ATCC 204508 / S288c) (Baker's yeast).